Here is a 215-residue protein sequence, read N- to C-terminus: 3-isopropylmalate dehydratase small subunit (215 aa).

This sequence belongs to the LeuD family. LeuD type 1 subfamily. Heterodimer of LeuC and LeuD.

It carries out the reaction (2R,3S)-3-isopropylmalate = (2S)-2-isopropylmalate. Its pathway is amino-acid biosynthesis; L-leucine biosynthesis; L-leucine from 3-methyl-2-oxobutanoate: step 2/4. In terms of biological role, catalyzes the isomerization between 2-isopropylmalate and 3-isopropylmalate, via the formation of 2-isopropylmaleate. The sequence is that of 3-isopropylmalate dehydratase small subunit from Hahella chejuensis (strain KCTC 2396).